The chain runs to 157 residues: Nicotinate dehydrogenase small FeS subunit (157 aa).

One can recognise a 2Fe-2S ferredoxin-type domain in the interval 4 to 80 (ITINLNLNGE…ESTIITLEGV (77 aa)). Residues Cys42, Cys47, Cys50, Cys62, Cys101, Cys104, Cys136, and Cys138 each contribute to the [2Fe-2S] cluster site.

Heterooctamer of NDHM, NDHL, NDHS and NDHF. Dimer of heterotetramers. The cofactor is [2Fe-2S] cluster.

It catalyses the reaction nicotinate + NADP(+) + H2O = 6-hydroxynicotinate + NADPH + H(+). Its pathway is cofactor degradation; nicotinate degradation; 6-hydroxynicotinate from nicotinate: step 1/1. Reversibly inactivated by selenide and sulfide. Not inhibited by cyanide. Catalyzes the hydroxylation of nicotinate to 6-hydroxynicotinate. Also active against 2-pyrazinecarboxylic acid, but inactive against other nicotinate analogs. In Eubacterium barkeri (Clostridium barkeri), this protein is Nicotinate dehydrogenase small FeS subunit (ndhS).